Consider the following 727-residue polypeptide: MPKNSKVTQREHSSEHVTESVADLLALEEPVDYKQSVLNVAGEAGGKQKAVEEELDAEDRPAWNSKLQYILAQIGFSVGLGNIWRFPYLCQKNGGGAYLVPYLVLLIIIGIPLFFLELAVGQRIRRGSIGVWHYICPRLGGIGFSSCIVCLFVGLYYNVIIGWSIFYFFKSFQYPLPWSECPVVRNGSVAVVEAECEKSSATTYFWYREALDISDSISESGGLNWKMTLCLLVAWSIVGMAVVKGIQSSGKVMYFSSLFPYVVLACFLVRGLLLRGAVDGILHMFTPKLDKMLDPQVWREAATQVFFALGLGFGGVIAFSSYNKQDNNCHFDAALVSFINFFTSVLATLVVFAVLGFKANIMNEKCVVENAEKILGYLNTNVLSRDLIPPHVNFSHLTTKDYMEMYNVIMTVKEDQFSALGLDPCLLEDELDKSVQGTGLAFIAFTEAMTHFPASPFWSVMFFLMLINLGLGSMIGTMAGITTPIIDTFKVPKEMFTVGCCVFAFLVGLLFVQRSGNYFVTMFDDYSATLPLTLIVILENIAVAWIYGTKKFMQELTEMLGFRPYRFYFYMWKFVSPLCMAVLTTASIIQLGVTPPGYSAWIKEEAAERYLYFPNWAMALLITLIVVATLPIPVVFVLRHFHLLSDGSNTLSVSYKKGRMMKDISNLEENDETRFILSKVPSEAPSPMPTHRSYLGPGSTSPLETSGNPNGRYGSGYLLASTPESEL.

At 1–69 (MPKNSKVTQR…RPAWNSKLQY (69 aa)) the chain is on the cytoplasmic side. A phosphoserine mark is found at Ser-13 and Ser-20. A helical membrane pass occupies residues 70 to 90 (ILAQIGFSVGLGNIWRFPYLC). At 91-95 (QKNGG) the chain is on the extracellular side. The chain crosses the membrane as a helical span at residues 96 to 116 (GAYLVPYLVLLIIIGIPLFFL). Topologically, residues 117 to 147 (ELAVGQRIRRGSIGVWHYICPRLGGIGFSSC) are cytoplasmic. Residues 148-168 (IVCLFVGLYYNVIIGWSIFYF) form a helical membrane-spanning segment. Over 169-222 (FKSFQYPLPWSECPVVRNGSVAVVEAECEKSSATTYFWYREALDISDSISESGG) the chain is Extracellular. N-linked (GlcNAc...) asparagine glycosylation is present at Asn-186. The chain crosses the membrane as a helical span at residues 223–243 (LNWKMTLCLLVAWSIVGMAVV). Topologically, residues 244-253 (KGIQSSGKVM) are cytoplasmic. Residues 254–274 (YFSSLFPYVVLACFLVRGLLL) traverse the membrane as a helical segment. At 275-300 (RGAVDGILHMFTPKLDKMLDPQVWRE) the chain is on the extracellular side. The chain crosses the membrane as a helical span at residues 301–321 (AATQVFFALGLGFGGVIAFSS). The Cytoplasmic segment spans residues 322 to 334 (YNKQDNNCHFDAA). Residues 335 to 355 (LVSFINFFTSVLATLVVFAVL) form a helical membrane-spanning segment. Residues 356–460 (GFKANIMNEK…HFPASPFWSV (105 aa)) lie on the Extracellular side of the membrane. Phosphotyrosine is present on Tyr-377. N-linked (GlcNAc...) asparagine glycosylation is present at Asn-393. The helical transmembrane segment at 461–481 (MFFLMLINLGLGSMIGTMAGI) threads the bilayer. The Cytoplasmic portion of the chain corresponds to 482–490 (TTPIIDTFK). A helical membrane pass occupies residues 491–511 (VPKEMFTVGCCVFAFLVGLLF). Over 512 to 527 (VQRSGNYFVTMFDDYS) the chain is Extracellular. Residues 528–548 (ATLPLTLIVILENIAVAWIYG) traverse the membrane as a helical segment. The Cytoplasmic portion of the chain corresponds to 549–573 (TKKFMQELTEMLGFRPYRFYFYMWK). A helical transmembrane segment spans residues 574–594 (FVSPLCMAVLTTASIIQLGVT). The Extracellular segment spans residues 595 to 617 (PPGYSAWIKEEAAERYLYFPNWA). The helical transmembrane segment at 618–638 (MALLITLIVVATLPIPVVFVL) threads the bilayer. The Cytoplasmic portion of the chain corresponds to 639–727 (RHFHLLSDGS…LLASTPESEL (89 aa)). Phosphoserine occurs at positions 665 and 701. Positions 680–727 (VPSEAPSPMPTHRSYLGPGSTSPLETSGNPNGRYGSGYLLASTPESEL) are disordered. Residues 698–709 (GSTSPLETSGNP) show a composition bias toward polar residues.

It belongs to the sodium:neurotransmitter symporter (SNF) (TC 2.A.22) family.

The protein resides in the cytoplasmic vesicle. It is found in the secretory vesicle. Its subcellular location is the synaptic vesicle membrane. It localises to the postsynapse. The protein localises to the presynapse. The catalysed reaction is L-proline(in) + Na(+)(in) = L-proline(out) + Na(+)(out). It carries out the reaction L-leucine(in) + Na(+)(in) = L-leucine(out) + Na(+)(out). It catalyses the reaction glycine(in) + Na(+)(in) = glycine(out) + Na(+)(out). The enzyme catalyses L-alanine(in) + Na(+)(in) = L-alanine(out) + Na(+)(out). The catalysed reaction is L-glutamine(in) + Na(+)(in) = L-glutamine(out) + Na(+)(out). Its function is as follows. Synaptic vesicle transporter with apparent selectivity for neutral amino acids. The transport is sodium-coupled but chloride-independent, likely driven by the proton electrochemical gradient generated by vacuolar H(+)-ATPase in an overall electrogenic mechanism. May contribute to the synaptic uptake of neurotransmitter precursors in a process coupled in part to vesicle exocytosis. This chain is Sodium-dependent neutral amino acid transporter SLC6A17, found in Homo sapiens (Human).